The primary structure comprises 532 residues: MRIGGIASGIDTESMIKQLMQVERIPLNKFTQRKITLEWQRDAYREVNLLLKKLDDAAANIRLRSSLNTKEASTTSKAFTAQPNAQVRNGSYQLKVNQIATQSRNISSEAISNGSTKISTTRALNEQNVYADGLNIEDYHGQTFTITTYNSSGAAVEKSFTIDTSKSLDSLFKDINSAGLGVRMSYNSTYDKVIIERTETGAFNAADGSNDYQIVFGGDTGFLNDVLKLNQANEVSGTNAEVEFIDPIMSSEPIVVSDSRTNRVTVGGITFSLTGTTEGFETLNVSSNTDAAFEKVMEFVDTYNATITELRSLLSEPRYRDYPPLTEEQRRELSEREAELWDEKAKSGLLRNDSMLNSLLAQMRADLYAPVQTNGQFSSITQIGITTSSDYRLGGFLEVDEDKLRAALEADPDSVHQLLNGTANSSLTSIPVKDRTSQQRSEIYSQTGLVGRIRSSLSSTMNDIVARAGNERRTEQQFTIGRQILDVDKRIDHFQQRLIQIENRYWAQFSRMEQMMNQANAQYASLQQFFVT.

The stretch at 507–528 (AQFSRMEQMMNQANAQYASLQQ) forms a coiled coil.

This sequence belongs to the FliD family. In terms of assembly, homopentamer.

It is found in the secreted. The protein resides in the bacterial flagellum. Required for the morphogenesis and for the elongation of the flagellar filament by facilitating polymerization of the flagellin monomers at the tip of growing filament. Forms a capping structure, which prevents flagellin subunits (transported through the central channel of the flagellum) from leaking out without polymerization at the distal end. The chain is Flagellar hook-associated protein 2 (fliD) from Halalkalibacterium halodurans (strain ATCC BAA-125 / DSM 18197 / FERM 7344 / JCM 9153 / C-125) (Bacillus halodurans).